A 314-amino-acid polypeptide reads, in one-letter code: Coiled-coil domain-containing protein 69 (314 aa).

Over residues 1-12 (MGCHNSKVCGQV) the composition is skewed to low complexity. Disordered regions lie at residues 1 to 43 (MGCH…HSSE) and 114 to 133 (RSVS…LHSE). Gly-2 carries the N-myristoyl glycine lipid modification. 2 stretches are compositionally biased toward basic and acidic residues: residues 20–43 (KAQE…HSSE) and 120–133 (HQSE…LHSE). The stretch at 106 to 291 (NDLHEQQMRS…QEKEELLFKL (186 aa)) forms a coiled coil.

This sequence belongs to the CCDC69 family.

The protein localises to the cytoplasm. The protein resides in the cytoskeleton. It localises to the spindle. Its subcellular location is the midbody. In terms of biological role, may act as a scaffold to regulate the recruitment and assembly of spindle midzone components. The sequence is that of Coiled-coil domain-containing protein 69 (ccdc69) from Danio rerio (Zebrafish).